The sequence spans 247 residues: Synaptonemal complex central element protein 1-like (247 aa).

Residues 71 to 196 adopt a coiled-coil conformation; the sequence is SEELGEAQAL…LQEARETWDS (126 aa). The disordered stretch occupies residues 189 to 247; the sequence is EARETWDSPGNCGLKTELEELEGQSQRSPEAQNDKGEASQEEQHHLETSEELPRTGTLC. Residues 220–241 are compositionally biased toward basic and acidic residues; that stretch reads QNDKGEASQEEQHHLETSEELP.

Belongs to the SYCE family. As to expression, isoform 1 is abundantly expressed in testis and weakly in ovary, it is not found in other tissues. Isoform 2 is expressed in testis and poorly in brain, heart, lung and other examined tissues.

In terms of biological role, may be involved in meiosis. Isoform 1 may be involved in meiosis during spermatogenesis while isoform 2 is probably related to a later stage of meiosis, in the development stage of secondary spermatocytes and spermatids. This chain is Synaptonemal complex central element protein 1-like (Syce1l), found in Mus musculus (Mouse).